We begin with the raw amino-acid sequence, 349 residues long: MGQQHGARNGLTHRELPRGMGLLLAMALMNVVLYVCLDHLFISPGRATEDPRRCPPGYFRMGRMRNCSRWLSCEELRTEVRQLKLVGEGAVKRVFLSEWNEHKVALSRLTRLEMKEDFLHGLRMLTSLQSQHVVTLAGFCEEDGTILTEYHPLGSLSNLEETLNLSKYRDVNTWQHRLRLAVEYVSIINYLHHSPLGTRVMCDSNDLPKTLSQYLLTSNFSIVANDLDALPLVDHGSRVLVKCGHRELHGDFVAPEQLWPYGEDTPFQDDLMPPYDEKIDIWKIPDVSSFLLGHVEGSDMVRFHLFDIHKACKNQFPAERPTAQNVLDAYQKVFHSLRDTVMSQTKEML.

At 1 to 19 (MGQQHGARNGLTHRELPRG) the chain is on the cytoplasmic side. The helical; Signal-anchor for type II membrane protein transmembrane segment at 20-42 (MGLLLAMALMNVVLYVCLDHLFI) threads the bilayer. Topologically, residues 43-349 (SPGRATEDPR…TVMSQTKEML (307 aa)) are lumenal. 3 N-linked (GlcNAc...) asparagine glycosylation sites follow: N66, N164, and N219. The region spanning 80 to 349 (VRQLKLVGEG…TVMSQTKEML (270 aa)) is the Protein kinase domain.

The protein belongs to the protein kinase superfamily. Ser/Thr protein kinase family. STKL subfamily.

Its subcellular location is the endoplasmic reticulum membrane. It carries out the reaction 3-O-[beta-D-GalNAc-(1-&gt;3)-beta-D-GlcNAc-(1-&gt;4)-alpha-D-Man]-L-Thr-[protein] + ATP = 3-O-[beta-D-GalNAc-(1-&gt;3)-beta-D-GlcNAc-(1-&gt;4)-(O-6-P-alpha-D-Man)]-Thr-[protein] + ADP + H(+). In terms of biological role, protein O-mannose kinase that specifically mediates phosphorylation at the 6-position of an O-mannose of the trisaccharide (N-acetylgalactosamine (GalNAc)-beta-1,3-N-acetylglucosamine (GlcNAc)-beta-1,4-mannose) to generate phosphorylated O-mannosyl trisaccharide (N-acetylgalactosamine-beta-1,3-N-acetylglucosamine-beta-1,4-(phosphate-6-)mannose). Phosphorylated O-mannosyl trisaccharide is a carbohydrate structure present in alpha-dystroglycan (DAG1), which is required for binding laminin G-like domain-containing extracellular proteins with high affinity. Only shows kinase activity when the GalNAc-beta-3-GlcNAc-beta-terminus is linked to the 4-position of O-mannose, suggesting that this disaccharide serves as the substrate recognition motif. This chain is Protein O-mannose kinase (Pomk), found in Rattus norvegicus (Rat).